Reading from the N-terminus, the 373-residue chain is MHNADCNWKNIMQSFTESPNDFSILHQECSSGLNIPINNIFTDTENNTHLLLDQTVTHNQNGTANILGKIYKVTNGYMFSQGDITSTNGANFLGLNQCTEEAAISVLQNYHSYKETLIPRASFINTLAETLNHLGLYLDNISPMEIGKYILDQFGKTYDEPTTEKSNNDTNCHEYSNSYYYVVALGTLALGSILGYTAKYVWDNYNGKNIKNENIELVRENKQLKFSTLLYENFKNNAFILDEIIKINNLNDIIKLAKSMQEFKSSISSLTNLNNEIIKLNSPSAIALNLASVSKILHEICDNLKGNDSFTTINNFAKLITMIRTENPDSEEYKASIKEILEIFSSHYEEIEELNYATPLLAIEAYSPLEIIE.

A helical membrane pass occupies residues 180 to 202 (YYVVALGTLALGSILGYTAKYVW).

The protein resides in the membrane. This is an uncharacterized protein from Rickettsia prowazekii (strain Madrid E).